Reading from the N-terminus, the 278-residue chain is Putative pyruvate, phosphate dikinase regulatory protein (278 aa).

149–156 contributes to the ADP binding site; the sequence is GVSRSSKT.

Belongs to the pyruvate, phosphate/water dikinase regulatory protein family. PDRP subfamily.

It carries out the reaction N(tele)-phospho-L-histidyl/L-threonyl-[pyruvate, phosphate dikinase] + ADP = N(tele)-phospho-L-histidyl/O-phospho-L-threonyl-[pyruvate, phosphate dikinase] + AMP + H(+). The catalysed reaction is N(tele)-phospho-L-histidyl/O-phospho-L-threonyl-[pyruvate, phosphate dikinase] + phosphate + H(+) = N(tele)-phospho-L-histidyl/L-threonyl-[pyruvate, phosphate dikinase] + diphosphate. Functionally, bifunctional serine/threonine kinase and phosphorylase involved in the regulation of the pyruvate, phosphate dikinase (PPDK) by catalyzing its phosphorylation/dephosphorylation. The sequence is that of Putative pyruvate, phosphate dikinase regulatory protein from Erythrobacter litoralis (strain HTCC2594).